The following is a 447-amino-acid chain: Probable cytosol aminopeptidase (447 aa).

Mn(2+)-binding residues include lysine 218 and aspartate 223. Lysine 230 is an active-site residue. Residues aspartate 241, aspartate 300, and glutamate 302 each contribute to the Mn(2+) site. Residue arginine 304 is part of the active site.

The protein belongs to the peptidase M17 family. The cofactor is Mn(2+).

The protein localises to the cytoplasm. The enzyme catalyses Release of an N-terminal amino acid, Xaa-|-Yaa-, in which Xaa is preferably Leu, but may be other amino acids including Pro although not Arg or Lys, and Yaa may be Pro. Amino acid amides and methyl esters are also readily hydrolyzed, but rates on arylamides are exceedingly low.. It carries out the reaction Release of an N-terminal amino acid, preferentially leucine, but not glutamic or aspartic acids.. Presumably involved in the processing and regular turnover of intracellular proteins. Catalyzes the removal of unsubstituted N-terminal amino acids from various peptides. The polypeptide is Probable cytosol aminopeptidase (pepA) (Mycoplasma genitalium (strain ATCC 33530 / DSM 19775 / NCTC 10195 / G37) (Mycoplasmoides genitalium)).